A 394-amino-acid chain; its full sequence is Ketoisovalerate oxidoreductase subunit VorA (394 aa).

As to quaternary structure, heterotetramer of one alpha, one beta, one delta and one gamma chain.

It catalyses the reaction 3-methyl-2-oxobutanoate + 2 oxidized [2Fe-2S]-[ferredoxin] + CoA = 2-methylpropanoyl-CoA + 2 reduced [2Fe-2S]-[ferredoxin] + CO2 + H(+). The polypeptide is Ketoisovalerate oxidoreductase subunit VorA (vorA) (Pyrococcus furiosus (strain ATCC 43587 / DSM 3638 / JCM 8422 / Vc1)).